A 352-amino-acid chain; its full sequence is Biotin synthase (352 aa).

Residues Asn44 to Lys262 enclose the Radical SAM core domain. Positions 59, 63, and 66 each coordinate [4Fe-4S] cluster. [2Fe-2S] cluster contacts are provided by Cys103, Cys134, Cys194, and Arg266.

This sequence belongs to the radical SAM superfamily. Biotin synthase family. As to quaternary structure, homodimer. The cofactor is [4Fe-4S] cluster. Requires [2Fe-2S] cluster as cofactor.

The enzyme catalyses (4R,5S)-dethiobiotin + (sulfur carrier)-SH + 2 reduced [2Fe-2S]-[ferredoxin] + 2 S-adenosyl-L-methionine = (sulfur carrier)-H + biotin + 2 5'-deoxyadenosine + 2 L-methionine + 2 oxidized [2Fe-2S]-[ferredoxin]. It functions in the pathway cofactor biosynthesis; biotin biosynthesis; biotin from 7,8-diaminononanoate: step 2/2. Catalyzes the conversion of dethiobiotin (DTB) to biotin by the insertion of a sulfur atom into dethiobiotin via a radical-based mechanism. This chain is Biotin synthase, found in Pseudomonas aeruginosa (strain UCBPP-PA14).